The chain runs to 515 residues: 2-isopropylmalate synthase (515 aa).

Residues 4-266 enclose the Pyruvate carboxyltransferase domain; sequence IKIFDTTLRD…ETGLILKETK (263 aa). Asp13, His201, His203, and Asn237 together coordinate Mn(2+). The segment at 392-515 is regulatory domain; sequence KLIQFGVSYD…ANLTRLVYES (124 aa).

This sequence belongs to the alpha-IPM synthase/homocitrate synthase family. LeuA type 1 subfamily. Homodimer. Requires Mn(2+) as cofactor.

The protein localises to the cytoplasm. It catalyses the reaction 3-methyl-2-oxobutanoate + acetyl-CoA + H2O = (2S)-2-isopropylmalate + CoA + H(+). The protein operates within amino-acid biosynthesis; L-leucine biosynthesis; L-leucine from 3-methyl-2-oxobutanoate: step 1/4. Functionally, catalyzes the condensation of the acetyl group of acetyl-CoA with 3-methyl-2-oxobutanoate (2-ketoisovalerate) to form 3-carboxy-3-hydroxy-4-methylpentanoate (2-isopropylmalate). This chain is 2-isopropylmalate synthase, found in Oceanobacillus iheyensis (strain DSM 14371 / CIP 107618 / JCM 11309 / KCTC 3954 / HTE831).